A 91-amino-acid chain; its full sequence is MANKQDLIAKVAEATELTKKDSAAAVDAVFSTIEAFLAEGEKVQLIGFGNFEVRERAARKGRNPQTGAEIEIAASKVPAFKAGKALKDAVK.

It belongs to the bacterial histone-like protein family.

Functionally, histone-like DNA-binding protein which is capable of wrapping DNA to stabilize it, and thus to prevent its denaturation under extreme environmental conditions. Also seems to act as a fortuitous virulence factor in delayed sequelae by binding to heparan sulfate-proteoglycans in the extracellular matrix of target organs and acting as a nidus for in situ immune complex formation. This is DNA-binding protein HU (hup) from Streptococcus pyogenes serotype M1.